The primary structure comprises 180 residues: Inner membrane-spanning protein YciB (180 aa).

The next 5 helical transmembrane spans lie at 22–42, 50–70, 76–96, 121–141, and 149–169; these read IYVA…LTWL, MTLI…VFHN, WKVT…QVVL, AAWA…AFWL, and FKVF…GIYI.

This sequence belongs to the YciB family.

The protein localises to the cell inner membrane. Its function is as follows. Plays a role in cell envelope biogenesis, maintenance of cell envelope integrity and membrane homeostasis. The polypeptide is Inner membrane-spanning protein YciB (Edwardsiella ictaluri (strain 93-146)).